The primary structure comprises 601 residues: ATP-dependent RNA helicase DeaD (601 aa).

The Q motif motif lies at 6-34; sequence STFSFLGLNPFIIQSLNEMGYVKPSPIQA. Positions 37–208 constitute a Helicase ATP-binding domain; it reads IPLLLEGRDV…KRFMRNPKEI (172 aa). ATP is bound at residue 50 to 57; the sequence is AQTGSGKT. The short motif at 156–159 is the DEAD box element; it reads DEAD. The region spanning 231 to 378 is the Helicase C-terminal domain; that stretch reads KTDALIRFLE…EVQLPKVELL (148 aa). Basic and acidic residues predominate over residues 552–576; sequence SRHYENKTTHRSIFNKDKNSNRRVS. Residues 552–601 are disordered; that stretch reads SRHYENKTTHRSIFNKDKNSNRRVSDGSFNKSNSPKKTEFKSSFFRRRNV.

Belongs to the DEAD box helicase family. DeaD/CsdA subfamily.

It is found in the cytoplasm. It catalyses the reaction ATP + H2O = ADP + phosphate + H(+). DEAD-box RNA helicase involved in various cellular processes at low temperature, including ribosome biogenesis, mRNA degradation and translation initiation. The protein is ATP-dependent RNA helicase DeaD of Buchnera aphidicola subsp. Acyrthosiphon pisum (strain APS) (Acyrthosiphon pisum symbiotic bacterium).